Reading from the N-terminus, the 132-residue chain is Small ribosomal subunit protein uS8 (132 aa).

It belongs to the universal ribosomal protein uS8 family. Part of the 30S ribosomal subunit. Contacts proteins S5 and S12.

In terms of biological role, one of the primary rRNA binding proteins, it binds directly to 16S rRNA central domain where it helps coordinate assembly of the platform of the 30S subunit. This Francisella tularensis subsp. novicida (strain U112) protein is Small ribosomal subunit protein uS8.